A 142-amino-acid polypeptide reads, in one-letter code: MAKKVEALIKLQVNAGMANPSPPVGPALGQHGVNIMEFCKAFNARTESIEKGAPVPVVISVYGDRSFTFDMKTPPAAYLLLKAAGVKSGSGRPNTEKVGTVTRAQLEEIVETKRADLTASDLEAAVRTIAGSARAMGLSVED.

It belongs to the universal ribosomal protein uL11 family. In terms of assembly, part of the ribosomal stalk of the 50S ribosomal subunit. Interacts with L10 and the large rRNA to form the base of the stalk. L10 forms an elongated spine to which L12 dimers bind in a sequential fashion forming a multimeric L10(L12)X complex. Post-translationally, one or more lysine residues are methylated.

Functionally, forms part of the ribosomal stalk which helps the ribosome interact with GTP-bound translation factors. The protein is Large ribosomal subunit protein uL11 of Pseudoalteromonas translucida (strain TAC 125).